The primary structure comprises 200 residues: MARCKS-related protein (200 aa).

The disordered stretch occupies residues 1–200 (MGSQSSKAPR…PTPASAEQNE (200 aa)). Residue Gly2 is the site of N-myristoyl glycine attachment. Position 14 is a phosphothreonine (Thr14). A compositionally biased stretch (low complexity) spans 16–26 (EEAAGASPAKA). Ser22, Ser36, and Ser48 each carry phosphoserine. A compositionally biased stretch (low complexity) spans 53 to 64 (GTDEAAGATGDA). At Ser71 the chain carries Phosphoserine. A compositionally biased stretch (basic and acidic residues) spans 74-85 (AEAKGEVAPKET). Residue Thr85 is modified to Phosphothreonine. A compositionally biased stretch (basic residues) spans 86-98 (PKKKKKFSFKKPF). Positions 87-110 (KKKKKFSFKKPFKLSGLSFKRNRK) are effector domain involved in lipid-binding and calmodulin-binding. 3 positions are modified to phosphoserine; by PKC: Ser93, Ser101, and Ser104. Phosphoserine is present on Ser119. The residue at position 120 (Ser120) is a Phosphoserine; by MAPK8. A phosphoserine mark is found at Ser132 and Ser135. Thr148 carries the phosphothreonine; by MAPK8 modification. 3 positions are modified to phosphoserine: Ser151, Ser162, and Ser165. The span at 156–165 (AKGAEASAAS) shows a compositional bias: low complexity. At Thr170 the chain carries Phosphothreonine. The span at 178 to 200 (AAEPSTPSGPESGPTPASAEQNE) shows a compositional bias: low complexity. Residue Thr183 is modified to Phosphothreonine; by MAPK8. Position 192 is a phosphothreonine (Thr192).

The protein belongs to the MARCKS family. As to quaternary structure, binds to filamentous actin (F-actin), but not to monomeric G-actin, independently of its phosphorylation status. Interacts with calmodulin. Post-translationally, phosphorylated. Phosphorylation at Ser-120 and Thr-183 is non-redundantly catalyzed by MAPK8 in vivo. Phosphorylation at Thr-148 is preferentially catalyzed by MAPK8 in vivo, but this modification can also be catalyzed by other kinases in the absence of MAPK8. May be phosphorylated by protein kinase C, which disrupts the interaction with calmodulin. As to expression, expressed at high levels in brain cortex and hippocampus, including dentate gyrus, anterior olfactory nucleus, primary olfactory cortex, entorhinal cortex, medial preoptic area and dorsomedial hypothalamic nucleus (at protein level). Expressed in neuronal cells (at protein level). Detected in the retina. Strongly expressed in testis and uterus; expressed at lower levels in cerebellum, cerebrum, adipose tissue, spleen, kidney, thyroid, liver, lung, skeletal muscle and heart. Detected in T-cells and B-cells.

The protein resides in the cytoplasm. It is found in the cytoskeleton. The protein localises to the cell membrane. Functionally, involved in the control of cell movement by regulating actin cytoskeleton homeostasis and filopodium and lamellipodium formation. When unphosphorylated, induces cell migration. When phosphorylated by MAPK8, induces actin bundles formation and stabilization, thereby reducing actin plasticity, hence restricting cell movement, including neuronal migration. May be involved in coupling the protein kinase C and calmodulin signal transduction systems. The chain is MARCKS-related protein (Marcksl1) from Mus musculus (Mouse).